Reading from the N-terminus, the 669-residue chain is Potassium voltage-gated channel subfamily KQT member 1 (669 aa).

Over 1–120 (MDTASSPPNA…YNFLERPTGW (120 aa)) the chain is Cytoplasmic. Ser-27 bears the Phosphoserine; by PKA mark. Residues 121–142 (KCFVYHFTVFLIVLVCLIFSVL) traverse the membrane as a helical segment. Over 143 to 153 (STIEQYAALAT) the chain is Extracellular. Residues 154 to 176 (GTLFWMEIVLVVFFGTEYVVRLW) form a helical membrane-spanning segment. Residues 177 to 192 (SAGCRSKYVGIWGRLR) are Cytoplasmic-facing. The chain crosses the membrane as a helical span at residues 193 to 218 (FARKPISIIDLIVVVASMVVLCVGSK). At 219–226 (GQVFATSA) the chain is on the extracellular side. Residues 227 to 242 (IRGIRFLQILRMLHVD) traverse the membrane as a helical; Voltage-sensor segment. Residues 238 to 246 (MLHVDRQGG) are interaction with KCNE3. Topologically, residues 243-260 (RQGGTWRLLGSVVFIHRQ) are cytoplasmic. Gln-244 contributes to the a 1,2-diacyl-sn-glycero-3-phospho-(1D-myo-inositol-4,5-bisphosphate) binding site. Residues 261–283 (ELITTLYIGFLGLIFSSYFVYLA) form a helical membrane-spanning segment. Over 284-299 (EKDAVNESGRIEFGSY) the chain is Extracellular. The N-linked (GlcNAc...) asparagine glycan is linked to Asn-289. The segment at residues 300–320 (ADALWWGVVTVTTIGYGDKVP) is an intramembrane region (pore-forming). Topologically, residues 321-322 (QT) are extracellular. A helical transmembrane segment spans residues 323-348 (WVGKTIASCFSVFAISFFALPAGILG). At 349–669 (SGFALKVQQK…VPQTGPDEGS (321 aa)) the chain is on the cytoplasmic side. The segment at 370–382 (AAASLIQTAWRCY) is interaction with CALM. A phosphoserine mark is found at Ser-407 and Ser-409. Residues 515-529 (KVIRRMQYFVAKKKF) form an interaction with CALM; calcium-dependent region. An interaction with KCNE1 C-terminus region spans residues 535 to 572 (PYDVRDVIEQYSQGHLNLMVRIKELQRRLDQSIGKPSL). Positions 585–621 (SNTIGARLNRVEDKVTQLDQRLVIITDMLHQLLSLQQ) form a coiled coil. Residues 588–616 (IGARLNRVEDKVTQLDQRLVIITDMLHQL) form an interaction with AKAP9 region. Residues 589–620 (GARLNRVEDKVTQLDQRLVIITDMLHQLLSLQ) are C-terminal assembly domain (tetramerization).

The protein belongs to the potassium channel family. KQT (TC 1.A.1.15) subfamily. Kv7.1/KCNQ1 sub-subfamily. Tetramer. Heterotetramer with KCNE1; targets to the membrane raft. Interacts (via C-terminus) with CALM; forms a heterooctameric structure (with 4:4 KCNQ1:CALM stoichiometry) in a calcium-independent manner. Interacts with AKAP9; targets protein kinase A (PKA) catalytic and regulatory subunits and protein phosphatase 1 (PP1) to the KCNQ1-KCNE1 complex, allowing PKA-mediated phosphorylation and increase of delayed rectifier potassium channel activity. Interacts with KCNE2; form a heterooligomer complex that targets to the membrane raft and leading to currents with an apparently instantaneous activation, a rapid deactivation process and a linear current-voltage relationship and decreases the amplitude of the outward current. Interacts with AP2M1; mediates estrogen-induced internalization via clathrin-coated vesicles. Interacts with NEDD4L; promotes internalization and decreases I(Ks) currents. Interacts with USP2; counteracts the NEDD4L-specific down-regulation of I(Ks) and restore plasma membrane localization. Heterotetramer with KCNQ5; has a voltage-gated potassium channel activity. Interacts with KCNE3; produces a current with nearly instantaneous activation with a linear current-voltage relationship and alters membrane raft localization. Interacts with KCNE4; impairs KCNQ1 localization in lipid rafts and inhibits voltage-gated potassium channel activity. Interacts with KCNE5; impairs KCNQ1 localization in lipid rafts and only conducts current upon strong and continued depolarization. Interacts with SLC5A3; forms coregulatory channel-transporter complexes that modulate Na(+)-coupled myo-inositol influx through the transporter. In terms of processing, phosphorylation at Ser-27 by PKA; increases delayed rectifier potassium channel activity of the KCNQ1-KCNE1 complex through a macromolecular complex that includes PKA, PP1, and the targeting protein AKAP9. Post-translationally, ubiquitinated by NEDD4L; promotes internalization. The ubiquitinylated form is internalized through a clathrin-mediated endocytosis by interacting with AP2M1 and is recycled back to the cell membrane via RAB4A and RAB11A. Deubiquitinated by USP2; counteracts the NEDD4L-specific down-regulation of I(Ks) and restores the membrane localization.

It localises to the cell membrane. It is found in the cytoplasmic vesicle membrane. The protein localises to the early endosome. Its subcellular location is the membrane raft. The protein resides in the endoplasmic reticulum. It localises to the basolateral cell membrane. It is found in the apical cell membrane. It carries out the reaction K(+)(in) = K(+)(out). Its activity is regulated as follows. PIP2 molecule is essential to activate KCNQ channels by inducing the coupling of the voltage-sensing domain (VSD) and the pore-forming domain (PD). Upon channel activation, PIP2 disrupts the VSD-calmodulin/CALM interactions, causing the release of CALM from the VSD which triggers the opening of the gate. Calcium potentiates KCNQ1 channel current through calcium-bound CALM. Calcium-bound CALM competes with PIP2 to stabilize the channel open state. In terms of biological role, pore-forming subunit of the voltage-gated potassium (Kv) channel involved in the regulation of cardiomyocyte excitability and important in normal development and functions of myocardium, inner ear, stomach and colon. Associates with KCNE beta subunits that modulates current kinetics. Induces a voltage-dependent by rapidly activating and slowly deactivating potassium-selective outward current. Also promotes a delayed voltage activated potassium current showing outward rectification characteristic. During beta-adrenergic receptor stimulation participates in cardiac repolarization by associating with KCNE1 to form the I(Ks) cardiac potassium current that increases the amplitude and slows down the activation kinetics of outward potassium current I(Ks). Muscarinic agonist oxotremorine-M strongly suppresses KCNQ1/KCNE1 current. When associated with KCNE3, forms the potassium channel that is important for cyclic AMP-stimulated intestinal secretion of chloride ions. This interaction with KCNE3 is reduced by 17beta-estradiol, resulting in the reduction of currents. During conditions of increased substrate load, maintains the driving force for proximal tubular and intestinal sodium ions absorption, gastric acid secretion, and cAMP-induced jejunal chloride ions secretion. Allows the provision of potassium ions to the luminal membrane of the secretory canaliculus in the resting state as well as during stimulated acid secretion. When associated with KCNE2, forms a heterooligomer complex leading to currents with an apparently instantaneous activation, a rapid deactivation process and a linear current-voltage relationship and decreases the amplitude of the outward current. When associated with KCNE4, inhibits voltage-gated potassium channel activity. When associated with KCNE5, this complex only conducts current upon strong and continued depolarization. Also forms a heterotetramer with KCNQ5 that has a voltage-gated potassium channel activity. Binds with phosphatidylinositol 4,5-bisphosphate. KCNQ1-KCNE2 channel associates with Na(+)-coupled myo-inositol symporter in the apical membrane of choroid plexus epithelium and regulates the myo-inositol gradient between blood and cerebrospinal fluid with an impact on neuron excitability. This chain is Potassium voltage-gated channel subfamily KQT member 1, found in Rattus norvegicus (Rat).